Reading from the N-terminus, the 903-residue chain is MLIPSKLSRPVRLQNTVIRDRLLVKLSGVANYRLTLINCPAGYGKTTLIAQWAADQSDLGWYSLDESDNQPERFATYLVAAIQLATGGHCSKSEAISQKHQYASLSALFAQLFIELSEWDGPLYLVIDDYHLITNDAIHEAMRFFLRHQPENLTLIMLSRTLPPLGIANLRVRDQLLELGMQQLAFNHQEAQQFFDCRLSVPLEQGDSSRLCDEVEGWATALQLIALSSRQPNSSAQKSAKRLAGLNASHLSDYLVDEVLDQVDSDARAFLLRCSVLRSMNDALIVRLTGEDNGQQRLEELERQGLFIHRMDDSGEWFCFHPLFATFLRQRCQWEMALELPELHHAAAEGWMALGYPAEAIHHALAAGDVGMLRDILLQHAWTLFNHSELALLEQCLVALPYSLLVQNPELALLQAWLAQSQHRYGEVNTLLERAESAMQERKIPIDEILRAEFDALRAQVAINAGKPEEAEKLATDALKYLPMANFYSRIVATSVTGEVHHCKGELSRALPMMQQTEQMARRHEAYHYALWALLQQSEILIAQGFLQAAYETQDKAFDLIHEQHLEQLPMHEFLLRIRSQVLWSWSRLDEAEEAARKGIEILVNYQPQQQLQCLAMLAKCSLARGDLDNANMYIQRCEALQHGSQYHLDWITNADKPRVIHWQMTGDKAAAANWLRQAEKPGMADNHFLQGQWRNIARIQIMLGRFNEAEVVLDELNENARRLRLTSDLNRNLLLSNILYWQTERKSEAQKALIESLSLANRTGFISHFVIEGEVMAQQLRQLIQLNALPELEQHRAQRILKDINQHHRHKFAHFDEIFVDKLLTHPQVPELIRTSPLTQREWQVLGLIYSGYSNDQIAGELEVAATTIKTHIRNLYQKLGVAHRQDAVQQAQRLLQMMGYV.

Position 39–46 (39–46 (CPAGYGKT)) interacts with ATP. An HTH luxR-type domain is found at 832 to 897 (ELIRTSPLTQ…DAVQQAQRLL (66 aa)). The H-T-H motif DNA-binding region spans 856-875 (NDQIAGELEVAATTIKTHIR).

The protein belongs to the MalT family. In terms of assembly, monomer in solution. Oligomerizes to an active state in the presence of the positive effectors ATP and maltotriose.

With respect to regulation, activated by ATP and maltotriose, which are both required for DNA binding. Its function is as follows. Positively regulates the transcription of the maltose regulon whose gene products are responsible for uptake and catabolism of malto-oligosaccharides. Specifically binds to the promoter region of its target genes, recognizing a short DNA motif called the MalT box. The protein is HTH-type transcriptional regulator MalT of Yersinia enterocolitica serotype O:8 / biotype 1B (strain NCTC 13174 / 8081).